The following is a 289-amino-acid chain: Iodotyrosine deiodinase 1 (289 aa).

A helical transmembrane segment spans residues 1-21 (MYFLTPILVAILCILVVWIFK). The span at 47–58 (DLKDSSDLHQAE) shows a compositional bias: basic and acidic residues. The disordered stretch occupies residues 47-69 (DLKDSSDLHQAEEDADEWQESEE). A compositionally biased stretch (acidic residues) spans 59 to 69 (EDADEWQESEE). Residues 100-104 (RRSVR), Ser-128, and 128-129 (SG) each bind FMN. Ala-130, Glu-157, Tyr-161, and Lys-182 together coordinate 3,5-diiodo-L-tyrosine. 4 residues coordinate 3-iodo-L-tyrosine: Ala-130, Glu-157, Tyr-161, and Lys-182. FMN is bound by residues 237-239 (TTT) and Arg-279.

The protein belongs to the nitroreductase family. In terms of assembly, homodimer. FMN is required as a cofactor.

It is found in the cell membrane. The protein resides in the cytoplasmic vesicle membrane. It carries out the reaction 2 iodide + L-tyrosine + 2 NADP(+) = 3,5-diiodo-L-tyrosine + 2 NADPH + H(+). The enzyme catalyses iodide + L-tyrosine + NADP(+) = 3-iodo-L-tyrosine + NADPH. It catalyses the reaction 3-iodo-L-tyrosine + iodide + NADP(+) = 3,5-diiodo-L-tyrosine + NADPH + H(+). The catalysed reaction is L-tyrosine + chloride + NADP(+) = 3-chloro-L-tyrosine + NADPH. It carries out the reaction bromide + L-tyrosine + NADP(+) = 3-bromo-L-tyrosine + NADPH. Catalyzes the dehalogenation of halotyrosines such as 3-bromo-L-tyrosine, 3-chloro-L-tyrosine, 3-iodo-L-tyrosine and 3,5-diiodo-L-tyrosine. During thyroid hormone biosynthesis, facilitates iodide salvage by catalysing the oxidative NADPH-dependent deiodination of the halogenated by-products of thyroid hormone production, monoiodotyrosine (L-MIT) and diiodotyrosine (L-DIT). The scavanged iodide can then reenter the hormone-producing pathways. Acts more efficiently on 3-iodo-L-tyrosine than 3,5-diiodo-L-tyrosine. In Pongo abelii (Sumatran orangutan), this protein is Iodotyrosine deiodinase 1 (IYD).